Reading from the N-terminus, the 278-residue chain is Urease accessory protein UreD (278 aa).

Belongs to the UreD family. UreD, UreF and UreG form a complex that acts as a GTP-hydrolysis-dependent molecular chaperone, activating the urease apoprotein by helping to assemble the nickel containing metallocenter of UreC. The UreE protein probably delivers the nickel.

It localises to the cytoplasm. In terms of biological role, required for maturation of urease via the functional incorporation of the urease nickel metallocenter. This is Urease accessory protein UreD from Escherichia coli.